We begin with the raw amino-acid sequence, 518 residues long: Nitrogenase iron-iron protein alpha chain (518 aa).

Residues Cys49 and Cys75 each contribute to the [8Fe-7S] cluster site. The [8Fe-9S-C-homocitryl] cluster site is built by Cys257 and His423.

Hexamer of two alpha, two beta, and two delta chains. [8Fe-7S] cluster is required as a cofactor. [8Fe-9S-C-homocitryl] cluster serves as cofactor.

The catalysed reaction is N2 + 8 reduced [2Fe-2S]-[ferredoxin] + 16 ATP + 16 H2O = H2 + 8 oxidized [2Fe-2S]-[ferredoxin] + 2 NH4(+) + 16 ADP + 16 phosphate + 6 H(+). This iron-iron protein is part of the nitrogenase complex that catalyzes the key enzymatic reactions in nitrogen fixation. Other nitrogenase complexes utilize a molybdenum-iron protein or a vanadium-iron protein. This Ruminiclostridium hungatei (Clostridium hungatei) protein is Nitrogenase iron-iron protein alpha chain (anfD).